A 431-amino-acid chain; its full sequence is Sulfide dehydrogenase [flavocytochrome c] flavoprotein chain (431 aa).

The segment at residues 1 to 30 (MTLNRRDFIKTSGAAVAAVGILGFPHLAFG) is a signal peptide (tat-type signal). Residue 70-76 (YTCYLSN) coordinates FAD. The cysteines at positions 191 and 367 are disulfide-linked.

Dimer of one cytochrome and one flavoprotein. In terms of processing, predicted to be exported by the Tat system. The position of the signal peptide cleavage has been experimentally proven.

The protein resides in the periplasm. The enzyme catalyses hydrogen sulfide + 2 Fe(III)-[cytochrome c] = sulfur + 2 Fe(II)-[cytochrome c] + H(+). In Allochromatium vinosum (strain ATCC 17899 / DSM 180 / NBRC 103801 / NCIMB 10441 / D) (Chromatium vinosum), this protein is Sulfide dehydrogenase [flavocytochrome c] flavoprotein chain (fccB).